We begin with the raw amino-acid sequence, 269 residues long: Formamidopyrimidine-DNA glycosylase (269 aa).

The active-site Schiff-base intermediate with DNA is Pro2. The active-site Proton donor is the Glu3. Lys58 (proton donor; for beta-elimination activity) is an active-site residue. DNA contacts are provided by His91, Arg110, and Lys150. The FPG-type zinc-finger motif lies at 235-269 (SVYGCKNKKCYRCKGIIIKFVQNQRSTFYCKKCQT). The active-site Proton donor; for delta-elimination activity is the Arg259.

The protein belongs to the FPG family. In terms of assembly, monomer. It depends on Zn(2+) as a cofactor.

The catalysed reaction is Hydrolysis of DNA containing ring-opened 7-methylguanine residues, releasing 2,6-diamino-4-hydroxy-5-(N-methyl)formamidopyrimidine.. It catalyses the reaction 2'-deoxyribonucleotide-(2'-deoxyribose 5'-phosphate)-2'-deoxyribonucleotide-DNA = a 3'-end 2'-deoxyribonucleotide-(2,3-dehydro-2,3-deoxyribose 5'-phosphate)-DNA + a 5'-end 5'-phospho-2'-deoxyribonucleoside-DNA + H(+). Functionally, involved in base excision repair of DNA damaged by oxidation or by mutagenic agents. Acts as a DNA glycosylase that recognizes and removes damaged bases. Has a preference for oxidized purines, such as 7,8-dihydro-8-oxoguanine (8-oxoG). Has AP (apurinic/apyrimidinic) lyase activity and introduces nicks in the DNA strand. Cleaves the DNA backbone by beta-delta elimination to generate a single-strand break at the site of the removed base with both 3'- and 5'-phosphates. The protein is Formamidopyrimidine-DNA glycosylase of Vesicomyosocius okutanii subsp. Calyptogena okutanii (strain HA).